A 119-amino-acid chain; its full sequence is ARRKRAATHPPVATAVVAAILGLKDRKGSSMVAIKKYLAANYNVDVARLGPFIRRFVRKAVAEGMLVQNKGSFRVNKTALPKKKKAAKKPKAKKVKKPKSAAKKKTNRARAPKTKKNRN.

Residues Thr-8–Lys-77 form the H15 domain. The segment at Asn-76 to Asn-119 is disordered. A compositionally biased stretch (basic residues) spans Leu-80 to Asn-119.

It belongs to the histone H1/H5 family.

The protein localises to the nucleus. Its subcellular location is the chromosome. In terms of biological role, histones H1 are necessary for the condensation of nucleosome chains into higher-order structures. In Platynereis dumerilii (Dumeril's clam worm), this protein is Histone H1B, sperm.